Consider the following 291-residue polypeptide: GTPase Era (291 aa).

In terms of domain architecture, Era-type G spans 2–167; sequence KSGFVSIIGR…LDEIVKCLNE (166 aa). Residues 10 to 17 are G1; sequence GRTNAGKS. Position 10–17 (10–17) interacts with GTP; the sequence is GRTNAGKS. Residues 36–40 form a G2 region; it reads NATRR. A G3 region spans residues 57–60; sequence DTPG. GTP-binding positions include 57 to 61 and 116 to 119; these read DTPGL and NKVD. The segment at 116–119 is G4; the sequence is NKVD. The interval 146-148 is G5; the sequence is YSS. The region spanning 186-274 is the KH type-2 domain; the sequence is YRDFILESIY…LLKLFVTVKK (89 aa).

This sequence belongs to the TRAFAC class TrmE-Era-EngA-EngB-Septin-like GTPase superfamily. Era GTPase family. As to quaternary structure, monomer.

Its subcellular location is the cytoplasm. It localises to the cell inner membrane. An essential GTPase that binds both GDP and GTP, with rapid nucleotide exchange. Plays a role in 16S rRNA processing and 30S ribosomal subunit biogenesis and possibly also in cell cycle regulation and energy metabolism. This is GTPase Era from Campylobacter jejuni subsp. doylei (strain ATCC BAA-1458 / RM4099 / 269.97).